A 468-amino-acid polypeptide reads, in one-letter code: Proline--tRNA ligase (468 aa).

Belongs to the class-II aminoacyl-tRNA synthetase family. ProS type 3 subfamily. Homodimer.

The protein localises to the cytoplasm. The catalysed reaction is tRNA(Pro) + L-proline + ATP = L-prolyl-tRNA(Pro) + AMP + diphosphate. Functionally, catalyzes the attachment of proline to tRNA(Pro) in a two-step reaction: proline is first activated by ATP to form Pro-AMP and then transferred to the acceptor end of tRNA(Pro). The polypeptide is Proline--tRNA ligase (Frankia alni (strain DSM 45986 / CECT 9034 / ACN14a)).